Reading from the N-terminus, the 83-residue chain is CDC42 small effector protein 2 (83 aa).

2 S-palmitoyl cysteine lipidation sites follow: cysteine 10 and cysteine 11. In terms of domain architecture, CRIB spans 28 to 41 (IGEPTNFVHTAHVG). Serine 42 and serine 51 each carry phosphoserine.

This sequence belongs to the CDC42SE/SPEC family. Interacts with CDC42 (in GTP-bound form). Interacts weakly with RAC1 and not at all with RHOA.

The protein resides in the cytoplasm. Its subcellular location is the cytoskeleton. It is found in the cell membrane. It localises to the cell projection. The protein localises to the phagocytic cup. In terms of biological role, probably involved in the organization of the actin cytoskeleton by acting downstream of CDC42, inducing actin filament assembly. Alters CDC42-induced cell shape changes. In activated T-cells, may play a role in CDC42-mediated F-actin accumulation at the immunological synapse. May play a role in early contractile events in phagocytosis in macrophages. This chain is CDC42 small effector protein 2 (Cdc42se2), found in Rattus norvegicus (Rat).